The primary structure comprises 482 residues: MGLLAYLLVILLILNVFFAAVTVFLERRDTSATWAWLLVLTFVPIFGFIIYLIFGRKLSGKKIFDWKGQEKIGIQESTANQIEMIRQKEFPFSDPNVKKHRDLIYLLLVNDGAILTQDNEVELFIDGHEKFDALIADIEKAKDHIHLIYYIFHSDELGNRLMRVLERKAAEGLNVKIIYDAMGSRTTKKSFFRTFEKNGGLVRPFFPSKLPLINFRLNYRNHRKLAIIDGDVGYIGGFNIGDEYLGRSKKFGYWRDTHLRVHGKAVYAMQTRFIMDWNSASSTHKIDYKARYFPTFHGKGHTSMQIVSSGPDSEWQQIKNGYIKMINAAKKTIYLQSPYFIPDASLLEAIKIAALSGVDVRVMIPNKPDHAFVYRATTNYAGELMETGAKIFIYDNGFIHAKTLVVDGEIASVGTANMDFRSFRLNFEVNAFIYEKKMVQKLEDAFLEDILKSYQLTPELYAKRSLWIKFKEAVSRLLSPIL.

2 consecutive transmembrane segments (helical) span residues 4–24 (LAYL…VTVF) and 34–54 (WAWL…YLIF). 2 PLD phosphodiesterase domains span residues 217–244 (LNYR…GDEY) and 395–422 (DNGF…DFRS). Catalysis depends on residues His-222, Lys-224, Asp-229, His-400, Lys-402, and Asp-407.

This sequence belongs to the phospholipase D family. Cardiolipin synthase subfamily.

Its subcellular location is the cell membrane. The catalysed reaction is 2 a 1,2-diacyl-sn-glycero-3-phospho-(1'-sn-glycerol) = a cardiolipin + glycerol. Its function is as follows. Catalyzes the reversible phosphatidyl group transfer from one phosphatidylglycerol molecule to another to form cardiolipin (CL) (diphosphatidylglycerol) and glycerol. The polypeptide is Cardiolipin synthase (cls) (Listeria innocua serovar 6a (strain ATCC BAA-680 / CLIP 11262)).